The chain runs to 375 residues: Queuine tRNA-ribosyltransferase (375 aa).

The active-site Proton acceptor is the Asp89. Residues 89–93 (DSGGF), Asp143, Gln187, and Gly214 each bind substrate. Residues 245 to 251 (GVGKPED) form an RNA binding region. The Nucleophile role is filled by Asp264. The interval 269–273 (TRNAR) is RNA binding; important for wobble base 34 recognition. Residues Cys302, Cys304, Cys307, and His333 each coordinate Zn(2+).

The protein belongs to the queuine tRNA-ribosyltransferase family. In terms of assembly, homodimer. Within each dimer, one monomer is responsible for RNA recognition and catalysis, while the other monomer binds to the replacement base PreQ1. Requires Zn(2+) as cofactor.

The catalysed reaction is 7-aminomethyl-7-carbaguanine + guanosine(34) in tRNA = 7-aminomethyl-7-carbaguanosine(34) in tRNA + guanine. The protein operates within tRNA modification; tRNA-queuosine biosynthesis. Catalyzes the base-exchange of a guanine (G) residue with the queuine precursor 7-aminomethyl-7-deazaguanine (PreQ1) at position 34 (anticodon wobble position) in tRNAs with GU(N) anticodons (tRNA-Asp, -Asn, -His and -Tyr). Catalysis occurs through a double-displacement mechanism. The nucleophile active site attacks the C1' of nucleotide 34 to detach the guanine base from the RNA, forming a covalent enzyme-RNA intermediate. The proton acceptor active site deprotonates the incoming PreQ1, allowing a nucleophilic attack on the C1' of the ribose to form the product. After dissociation, two additional enzymatic reactions on the tRNA convert PreQ1 to queuine (Q), resulting in the hypermodified nucleoside queuosine (7-(((4,5-cis-dihydroxy-2-cyclopenten-1-yl)amino)methyl)-7-deazaguanosine). This Klebsiella pneumoniae subsp. pneumoniae (strain ATCC 700721 / MGH 78578) protein is Queuine tRNA-ribosyltransferase.